A 220-amino-acid chain; its full sequence is MAILFAVVARGTTILAKHAWCGGNFLEVTEQILAKIPSENNKLTYSHGNYLFHYICQDRIVYLCITDDDFERSRAFSFLNEVKKRFQTTYGSRAQTALPYAMNSEFSSVLAAQLKHHSENKSLDKVMETQAQVDELKGIMVRNIDLVAQRGERLELLIDKTENLVDSSVTFKTTSRNLARAMCMKNIKLTIIIIIVSIVFIYIIVSLLCGGFTWPNCVKK.

The residue at position 2 (A2) is an N-acetylalanine. At 2-188 (AILFAVVARG…ARAMCMKNIK (187 aa)) the chain is on the cytoplasmic side. The Longin domain maps to 7 to 110 (VVARGTTILA…AMNSEFSSVL (104 aa)). A v-SNARE coiled-coil homology domain is found at 125 to 185 (KVMETQAQVD…RNLARAMCMK (61 aa)). S167 and S168 each carry phosphoserine. The helical; Anchor for type IV membrane protein transmembrane segment at 189–209 (LTIIIIIVSIVFIYIIVSLLC) threads the bilayer. Residues 210–220 (GGFTWPNCVKK) are Vesicular-facing.

The protein belongs to the synaptobrevin family. Component of the SNARE complex composed of STX4, SNAP23 and VAMP7 that binds SYT7 during lysosomal exocytosis. Component of the SNARE complex composed of STX7, STX8, VAMP7 and VTI1B that is required for heterotypic fusion of late endosomes with lysosomes. May interact with STX17. Interacts with PICALM. Interacts with RAB21.

Its subcellular location is the cytoplasmic vesicle. It is found in the secretory vesicle membrane. The protein localises to the golgi apparatus. It localises to the trans-Golgi network membrane. The protein resides in the late endosome membrane. Its subcellular location is the lysosome membrane. It is found in the endoplasmic reticulum membrane. The protein localises to the phagosome membrane. It localises to the synapse. The protein resides in the synaptosome. Involved in the targeting and/or fusion of transport vesicles to their target membrane during transport of proteins from the early endosome to the lysosome. Required for heterotypic fusion of late endosomes with lysosomes and homotypic lysosomal fusion. Required for calcium regulated lysosomal exocytosis. Involved in the export of chylomicrons from the endoplasmic reticulum to the cis Golgi. Required for exocytosis of mediators during eosinophil and neutrophil degranulation, and target cell killing by natural killer cells. Required for focal exocytosis of late endocytic vesicles during phagosome formation. The protein is Vesicle-associated membrane protein 7 (Vamp7) of Mus musculus (Mouse).